We begin with the raw amino-acid sequence, 320 residues long: D-alanine--D-alanine ligase (320 aa).

The ATP-grasp domain maps to 104–308 (KRVCLSHGVP…YEDLCVEILR (205 aa)). 134–189 (AAEFGMPLMLKAPHEGSTIGIAKVETAEGMQAGFDLCAKYDDVVLVEQFVKGRELT) is a binding site for ATP. 3 residues coordinate Mg(2+): Asp261, Glu275, and Asn277.

Belongs to the D-alanine--D-alanine ligase family. The cofactor is Mg(2+). It depends on Mn(2+) as a cofactor.

Its subcellular location is the cytoplasm. The enzyme catalyses 2 D-alanine + ATP = D-alanyl-D-alanine + ADP + phosphate + H(+). Its pathway is cell wall biogenesis; peptidoglycan biosynthesis. Functionally, cell wall formation. This is D-alanine--D-alanine ligase from Janthinobacterium sp. (strain Marseille) (Minibacterium massiliensis).